Consider the following 434-residue polypeptide: MRLATDLETPRRVAVLSVHTSPLAQPGTGDAGGMNVYVLQTALQLARRGVEVEVFTRATSSADAPVVPVAPGVLVRNVVAGPFEGLDKNDLPTQLCAFTAGVLRAEATHEPGYYDVVHSHYWLSGQVGWLARDRWAVPLVHTAHTLAAVKNAALAAGDAPEPPLRAVGEQQVVDEADRLIVNTEVEAQQLVSLHNADRSRIDVVHPGVDLDVFTPGSRDAARAVFGLPTDQKIVAFVGRIQPLKAPDILLRAAAKLPGVRVLIAGGPSGSGLAQPDTLVRLADELGISDRVTFLPPQSREQLVNVYRAADLVAVPSYSESFGLVAVEAQACGTPVVAAAVGGLPVAVADGVSGALVDGHDIGDWADTISEVLDREPAALSRASAEHAAQFSWAHTVDALLASYSRAMSDYRARHPRPAARRSGRRFSMRRGVRT.

A 1D-myo-inositol 3-phosphate-binding site is contributed by H19. UDP-N-acetyl-alpha-D-glucosamine is bound by residues 25–26 (QP) and G33. Residues 30–35 (DAGGMN), K88, Y121, T145, and R165 each bind 1D-myo-inositol 3-phosphate. The UDP-N-acetyl-alpha-D-glucosamine site is built by R239, K244, and Q297. Residues Y306, R307, and A309 each coordinate Mg(2+). UDP-N-acetyl-alpha-D-glucosamine is bound by residues E319 and E327. T333 lines the Mg(2+) pocket. Positions 414-434 (HPRPAARRSGRRFSMRRGVRT) are disordered.

It belongs to the glycosyltransferase group 1 family. MshA subfamily. As to quaternary structure, homodimer.

It carries out the reaction 1D-myo-inositol 3-phosphate + UDP-N-acetyl-alpha-D-glucosamine = 1D-myo-inositol 2-acetamido-2-deoxy-alpha-D-glucopyranoside 3-phosphate + UDP + H(+). Its function is as follows. Catalyzes the transfer of a N-acetyl-glucosamine moiety to 1D-myo-inositol 3-phosphate to produce 1D-myo-inositol 2-acetamido-2-deoxy-glucopyranoside 3-phosphate in the mycothiol biosynthesis pathway. This is D-inositol 3-phosphate glycosyltransferase (mshA) from Mycolicibacterium smegmatis (strain ATCC 700084 / mc(2)155) (Mycobacterium smegmatis).